The chain runs to 55 residues: Large ribosomal subunit protein bL33 (55 aa).

The protein belongs to the bacterial ribosomal protein bL33 family.

In Kocuria rhizophila (strain ATCC 9341 / DSM 348 / NBRC 103217 / DC2201), this protein is Large ribosomal subunit protein bL33.